A 156-amino-acid chain; its full sequence is Small ribosomal subunit protein uS7 (156 aa).

This sequence belongs to the universal ribosomal protein uS7 family. As to quaternary structure, part of the 30S ribosomal subunit. Contacts proteins S9 and S11.

In terms of biological role, one of the primary rRNA binding proteins, it binds directly to 16S rRNA where it nucleates assembly of the head domain of the 30S subunit. Is located at the subunit interface close to the decoding center, probably blocks exit of the E-site tRNA. This is Small ribosomal subunit protein uS7 from Tropheryma whipplei (strain TW08/27) (Whipple's bacillus).